The following is a 106-amino-acid chain: NADH-quinone oxidoreductase subunit K (106 aa).

A run of 3 helical transmembrane segments spans residues 8 to 28, 35 to 55, and 66 to 86; these read IGIENYIFLSVVLFCIGVFGV, IIVFMSIEIMLNAVNLLFVAF, and VFVFFSMAVAAAEVAVGLAIL.

It belongs to the complex I subunit 4L family. As to quaternary structure, NDH-1 is composed of 14 different subunits. Subunits NuoA, H, J, K, L, M, N constitute the membrane sector of the complex.

It localises to the cell inner membrane. It carries out the reaction a quinone + NADH + 5 H(+)(in) = a quinol + NAD(+) + 4 H(+)(out). Its function is as follows. NDH-1 shuttles electrons from NADH, via FMN and iron-sulfur (Fe-S) centers, to quinones in the respiratory chain. The immediate electron acceptor for the enzyme in this species is believed to be a menaquinone. Couples the redox reaction to proton translocation (for every two electrons transferred, four hydrogen ions are translocated across the cytoplasmic membrane), and thus conserves the redox energy in a proton gradient. The protein is NADH-quinone oxidoreductase subunit K of Flavobacterium johnsoniae (strain ATCC 17061 / DSM 2064 / JCM 8514 / BCRC 14874 / CCUG 350202 / NBRC 14942 / NCIMB 11054 / UW101) (Cytophaga johnsonae).